We begin with the raw amino-acid sequence, 332 residues long: Melanocortin receptor 4 (332 aa).

The Extracellular portion of the chain corresponds to 1 to 43 (MNSTHHHGMYTSLHLWNRSSHGLHGNASESLGKGHSDGGCYEQ). N2, N17, and N26 each carry an N-linked (GlcNAc...) asparagine glycan. Disulfide bonds link C40–C279 and C271–C277. Residues 44–69 (LFVSPEVFVTLGVISLLENILVIVAI) form a helical membrane-spanning segment. The Cytoplasmic portion of the chain corresponds to 70–81 (AKNKNLHSPMYF). A helical membrane pass occupies residues 82-106 (FICSLAVADMLVSVSNGSETIVITL). Ca(2+) is bound by residues E100, D122, and D126. Over 107 to 123 (LNSTDTDAQSFTVNIDN) the chain is Extracellular. The helical transmembrane segment at 124–145 (VIDSVICSSLLASICSLLSIAV) threads the bilayer. Topologically, residues 146-165 (DRYFTIFYALQYHNIMTVRR) are cytoplasmic. Residues 166–186 (VGIIISCIWAACTVSGVLFII) form a helical membrane-spanning segment. At 187–191 (YSDSS) the chain is on the extracellular side. A helical transmembrane segment spans residues 192 to 215 (AVIICLITMFFTMLVLMASLYVHM). Over 216-248 (FLMARLHIKRIAVLPGTGTIRQGANMKGAITLT) the chain is Cytoplasmic. A helical membrane pass occupies residues 249-271 (ILIGVFVVCWAPFFLHLLFYISC). Residues 272–280 (PQNPYCVCF) are Extracellular-facing. Residues 281–304 (MSHFNLYLILIMCNAVIDPLIYAL) form a helical membrane-spanning segment. The Cytoplasmic segment spans residues 305-332 (RSQELRKTFKEIICFYPLGGICELPGRY). C318 carries S-palmitoyl cysteine lipidation.

It belongs to the G-protein coupled receptor 1 family. Homodimer; disulfide-linked, also forms higher order oligomers. Interacts with GNAS. Interacts with ATRNL1. Interacts with MGRN1; this interaction competes with GNAS-binding and thus inhibits agonist-induced cAMP production. Interacts with MRAP and MRAP2; these associated factors increase ligand-sensitivity and generation of cAMP. Brain, enriched in the striatum, nucleus accumbens, and periaqueductal gray.

The protein localises to the cell membrane. Functionally, hormone receptor that acts as a key component of the leptin-melanocortin pathway at the intersection of homeostatic maintenance of energetic state. Plays a role in regulating food intake: activation by a stimulating hormone such as anorexigenic alpha-melanocyte stimulating hormone (alpha-MSH) inhibits appetite, whereas binding to a natural antagonist like Agouti-related protein/AGRP promotes appetite. G-protein-coupled receptor that activates conventional Galphas signaling leading to induction of anorexogenic signaling in the hypothalamus to result in negative energy balance. Regulates the firing activity of neurons from the hypothalamus by alpha-MSH and AGRP independently of Galphas signaling by ligand-induced coupling of closure of inwardly rectifying potassium channel KCNJ13. In intestinal epithelial cells, plays a role in the inhibition of hepatic glucose production via nesfatin-1/NUCB2 leading to increased cyclic adenosine monophosphate (cAMP) levels and glucagon-like peptide 1 (GLP-1) secretion in the intestinal epithelium. The sequence is that of Melanocortin receptor 4 (Mc4r) from Rattus norvegicus (Rat).